The following is a 559-amino-acid chain: METSKEFEFRPAKETSRSKSPGGIVGRLSNFARNKARHSLSEKGSNSVGGSGGAGFDKPRKDLLKEFHKCKEAQDQRLDLSSIEITSIPSPIKELTQLTELFLYKNKLTCLPTEIGQLVNLKKLGLSENALTSLPDSLASLESLETLDLRHNKLTEVPSVIYKIGSLETLWLRYNRIVAVDEQIGNLSKLKMLDVRENKIRELPSAIGKLTSLVVCLVSYNHLTRVPEEIGDCHSLTQLDLQHNDLSELPYSIGKLVNLVRIGIRYNKIRCIPSELESCQQLEEFIVESNHLQLLPPNLLTMLPKIHTVNLSRNELTAFPAGGPQQFVSTVTINMEHNQISKIPIGIFSKATRLTKLNLKENELVSLPLDMGSWTSITELNLSTNQLKVLPEDIEKLVNLEILVLSNNQLKKLPNQIGNLNKLRELDLEENELETVPTEIGFLQHLTKLWVQSNKILTLPRSIGNLCSLQDLRLGENNLTAIPEEIGHLDSLKSLYLNDNSSLHNLPFELALCQSLEIMSIENSPLSQIPPEITAGGPSLVIQYLKMQGPYRGVVMNSQ.

Residues M1–R17 show a composition bias toward basic and acidic residues. The segment at M1 to G55 is disordered. LRR repeat units follow at residues Q74–L95, Q97–L118, N120–E142, S143–I164, S166–L187, K189–L210, S212–C233, S235–L256, N258–C279, Q281–M302, K305–Q326, S329–K350, R353–W374, S376–L397, N399–L420, K422–L443, H445–L466, S468–L489, S491–C513, and S515–G536.

The protein belongs to the SHOC2 family. Interacts with let-60.

Acts as a Ras effector and participates in MAPK pathway activation. Probably acts as a scaffolding protein in a protein phosphatase complex that specifically dephosphorylates Raf kinase and stimulates Raf activity at specialized signaling complexes upon Ras activation. Required for vulval development. Involved in fluid homeostasis. Plays a role in nicotinic acetylcholine receptor (nAChR)-mediated sensitivity to nicotine. The sequence is that of Leucine-rich repeat protein soc-2 (soc-2) from Caenorhabditis elegans.